A 376-amino-acid chain; its full sequence is Ribonucleoside-diphosphate reductase 1 subunit beta (376 aa).

The Fe cation site is built by D85, E116, and H119. Y123 is an active-site residue. Residues E205, E239, and H242 each coordinate Fe cation.

Belongs to the ribonucleoside diphosphate reductase small chain family. In terms of assembly, tetramer of two alpha (R1) and two beta (R2) subunits. The B1 protein is a dimer of alpha subunits. A radical transfer pathway occurs between Tyr-123 of R2 and R1. The cofactor is Fe cation.

It catalyses the reaction a 2'-deoxyribonucleoside 5'-diphosphate + [thioredoxin]-disulfide + H2O = a ribonucleoside 5'-diphosphate + [thioredoxin]-dithiol. In terms of biological role, provides the precursors necessary for DNA synthesis. Catalyzes the biosynthesis of deoxyribonucleotides from the corresponding ribonucleotides. R2 contains the tyrosyl radical required for catalysis. This is Ribonucleoside-diphosphate reductase 1 subunit beta (nrdB) from Escherichia coli O157:H7.